Here is a 1671-residue protein sequence, read N- to C-terminus: Kinesin-like protein unc-104 (1671 aa).

The Kinesin motor domain maps to 3–351; sequence SVKVAVRVRP…LRYADRAKQI (349 aa). Residue 97–104 coordinates ATP; that stretch reads GQTGAGKS. The stretch at 358–437 forms a coiled coil; the sequence is NEDANAKLIR…IAELNETWEE (80 aa). A disordered region spans residues 391–413; that stretch reads DELNKSTTGIKSPSKSRNRNGST. The span at 395 to 413 shows a compositional bias: polar residues; sequence KSTTGIKSPSKSRNRNGST. The FHA domain maps to 500–566; the sequence is TRLGTHEANV…LKTGSRVILG (67 aa). Residues 577-674 adopt a coiled-coil conformation; it reads EQARELREKI…EEQSMTMSMY (98 aa). Positions 949 to 973 are disordered; it reads DVDSGRGIDSNSASDCPENAEEPGE. The region spanning 1538–1636 is the PH domain; that stretch reads VVARKGLLNV…WLYAINPLLA (99 aa).

This sequence belongs to the TRAFAC class myosin-kinesin ATPase superfamily. Kinesin family. Unc-104 subfamily. Monomer.

The protein resides in the cytoplasm. It is found in the cytoskeleton. Its function is as follows. Required for presynaptic maturation, has a role in axonal transport of dense-core vesicles carrying synaptic vesicle precursors, components required for the morphological transformation of axonal growth cones to mature boutons. This Drosophila pseudoobscura pseudoobscura (Fruit fly) protein is Kinesin-like protein unc-104.